Here is a 338-residue protein sequence, read N- to C-terminus: Ketol-acid reductoisomerase (NADP(+)) (338 aa).

A KARI N-terminal Rossmann domain is found at 1–181 (MQVYYDKDAD…GGGRAGVIET (181 aa)). Residues 24 to 27 (YGSQ), arginine 47, serine 50, serine 52, and 82 to 85 (DEHQ) contribute to the NADP(+) site. Histidine 107 is an active-site residue. Glycine 133 is an NADP(+) binding site. One can recognise a KARI C-terminal knotted domain in the interval 182–327 (SFREETETDL…ERLRGMMPWI (146 aa)). Mg(2+) is bound by residues aspartate 190, glutamate 194, glutamate 226, and glutamate 230. Serine 251 serves as a coordination point for substrate.

This sequence belongs to the ketol-acid reductoisomerase family. It depends on Mg(2+) as a cofactor.

The enzyme catalyses (2R)-2,3-dihydroxy-3-methylbutanoate + NADP(+) = (2S)-2-acetolactate + NADPH + H(+). It catalyses the reaction (2R,3R)-2,3-dihydroxy-3-methylpentanoate + NADP(+) = (S)-2-ethyl-2-hydroxy-3-oxobutanoate + NADPH + H(+). The protein operates within amino-acid biosynthesis; L-isoleucine biosynthesis; L-isoleucine from 2-oxobutanoate: step 2/4. It participates in amino-acid biosynthesis; L-valine biosynthesis; L-valine from pyruvate: step 2/4. Its function is as follows. Involved in the biosynthesis of branched-chain amino acids (BCAA). Catalyzes an alkyl-migration followed by a ketol-acid reduction of (S)-2-acetolactate (S2AL) to yield (R)-2,3-dihydroxy-isovalerate. In the isomerase reaction, S2AL is rearranged via a Mg-dependent methyl migration to produce 3-hydroxy-3-methyl-2-ketobutyrate (HMKB). In the reductase reaction, this 2-ketoacid undergoes a metal-dependent reduction by NADPH to yield (R)-2,3-dihydroxy-isovalerate. This Alkalilimnicola ehrlichii (strain ATCC BAA-1101 / DSM 17681 / MLHE-1) protein is Ketol-acid reductoisomerase (NADP(+)).